The chain runs to 384 residues: Cytochrome b (384 aa).

4 helical membrane-spanning segments follow: residues 33-53 (YGSLLFLCLIIQIATGLFLAM), 77-98 (WLIRNMHANGASFFFICLYLHI), 113-133 (WNVGVILFLLVMMTAFVGYVL), and 178-198 (FFAFHFLFPFVIAAAAVIHLL). Residues histidine 83 and histidine 97 each contribute to the heme b site. The heme b site is built by histidine 182 and histidine 196. A ubiquinone is bound at residue histidine 201. 4 helical membrane-spanning segments follow: residues 226–246 (YKDLLGFALMLLALTSLALFT), 288–308 (LGGVLALLFSILVLMVVPILH), 320–340 (LSQMLFWTLVADVLILTWIGG), and 347–367 (FIIIGQVASVLYFMLFLVLMP).

It belongs to the cytochrome b family. The cytochrome bc1 complex contains 3 respiratory subunits (MT-CYB, CYC1 and UQCRFS1), 2 core proteins (UQCRC1 and UQCRC2) and probably 6 low-molecular weight proteins. Requires heme b as cofactor.

It is found in the mitochondrion inner membrane. Functionally, component of the ubiquinol-cytochrome c reductase complex (complex III or cytochrome b-c1 complex) that is part of the mitochondrial respiratory chain. The b-c1 complex mediates electron transfer from ubiquinol to cytochrome c. Contributes to the generation of a proton gradient across the mitochondrial membrane that is then used for ATP synthesis. This is Cytochrome b (mt-cyb) from Anoplogaster cornuta (Common fangtooth).